The following is a 305-amino-acid chain: Methionyl-tRNA formyltransferase (305 aa).

A (6S)-5,6,7,8-tetrahydrofolate-binding site is contributed by 111–114; that stretch reads SLLP.

It belongs to the Fmt family.

It carries out the reaction L-methionyl-tRNA(fMet) + (6R)-10-formyltetrahydrofolate = N-formyl-L-methionyl-tRNA(fMet) + (6S)-5,6,7,8-tetrahydrofolate + H(+). In terms of biological role, attaches a formyl group to the free amino group of methionyl-tRNA(fMet). The formyl group appears to play a dual role in the initiator identity of N-formylmethionyl-tRNA by promoting its recognition by IF2 and preventing the misappropriation of this tRNA by the elongation apparatus. The chain is Methionyl-tRNA formyltransferase from Campylobacter jejuni (strain RM1221).